The following is a 114-amino-acid chain: Iron-sulfur cluster assembly protein CyaY (114 aa).

Belongs to the frataxin family.

Functionally, involved in iron-sulfur (Fe-S) cluster assembly. May act as a regulator of Fe-S biogenesis. This chain is Iron-sulfur cluster assembly protein CyaY, found in Ralstonia pickettii (strain 12J).